Consider the following 504-residue polypeptide: Maturase K (504 aa).

The protein belongs to the intron maturase 2 family. MatK subfamily.

The protein localises to the plastid. It is found in the chloroplast. Usually encoded in the trnK tRNA gene intron. Probably assists in splicing its own and other chloroplast group II introns. In Quercus robur (English oak), this protein is Maturase K.